Reading from the N-terminus, the 448-residue chain is Argininosuccinate synthase (448 aa).

Residues 17–25 and A43 each bind ATP; that span reads AFSGGLDTS. An L-citrulline-binding site is contributed by Y99. ATP contacts are provided by G129 and T131. 3 residues coordinate L-aspartate: T131, N135, and D136. L-citrulline is bound at residue N135. ATP is bound at residue D136. L-citrulline is bound by residues R139 and S192. ATP is bound at residue D194. The L-citrulline site is built by T201, E203, and E280.

Belongs to the argininosuccinate synthase family. Type 2 subfamily. In terms of assembly, homotetramer.

It is found in the cytoplasm. The catalysed reaction is L-citrulline + L-aspartate + ATP = 2-(N(omega)-L-arginino)succinate + AMP + diphosphate + H(+). It participates in amino-acid biosynthesis; L-arginine biosynthesis; L-arginine from L-ornithine and carbamoyl phosphate: step 2/3. This chain is Argininosuccinate synthase, found in Acidovorax ebreus (strain TPSY) (Diaphorobacter sp. (strain TPSY)).